The chain runs to 87 residues: Toxin Cll5b (87 aa).

The signal sequence occupies residues 1–19; it reads MNSLLMITACLAEIGTVWA. An LCN-type CS-alpha/beta domain is found at 20–85; the sequence is KEGYLVNKST…TYPLPNKSCS (66 aa). 4 disulfide bridges follow: Cys31/Cys84, Cys35/Cys60, Cys44/Cys65, and Cys48/Cys67. Positions 86–87 are cleaved as a propeptide — removed by a carboxypeptidase; that stretch reads KK.

It belongs to the long (4 C-C) scorpion toxin superfamily. Sodium channel inhibitor family. Beta subfamily. Expressed by the venom gland.

Its subcellular location is the secreted. Its function is as follows. Beta toxins bind voltage-independently at site-4 of sodium channels (Nav) and shift the voltage of activation toward more negative potentials thereby affecting sodium channel activation and promoting spontaneous and repetitive firing. The protein is Toxin Cll5b of Centruroides limpidus (Mexican scorpion).